The following is a 92-amino-acid chain: Small ribosomal subunit protein uS19 (92 aa).

The protein belongs to the universal ribosomal protein uS19 family.

Its function is as follows. Protein S19 forms a complex with S13 that binds strongly to the 16S ribosomal RNA. In Listeria innocua serovar 6a (strain ATCC BAA-680 / CLIP 11262), this protein is Small ribosomal subunit protein uS19.